Consider the following 1226-residue polypeptide: Probable DNA-binding protein SNT1 (1226 aa).

2 disordered regions span residues 1 to 219 (MGYP…YSRS) and 264 to 331 (LKST…PDNI). Over residues 11–27 (GDKKRYHYSNNPNRRHP) the composition is skewed to basic residues. The span at 31-64 (YSKNSFPKSSNNGFVSSPTADNSTNPSVTPSTAS) shows a compositional bias: polar residues. Low complexity-rich tracts occupy residues 81 to 103 (PRPS…SSTR) and 116 to 131 (SSST…NTST). Composition is skewed to polar residues over residues 132 to 143 (ITHTNTDIGNSR) and 150 to 170 (SRYN…SALS). At serine 187 the chain carries Phosphoserine. Residues 202-211 (NNVSSVNNNS) show a composition bias toward low complexity. Residues 264–275 (LKSTHSQSSPSL) show a composition bias toward polar residues. Basic and acidic residues predominate over residues 280 to 304 (FHDANKLDKPEASVKVETPSKDETK). Serine 395 bears the Phosphoserine mark. Residues 539 to 591 (DLQKKYEKECEILTKLSENLRKEEIENKRKEHELMEQKRREEGIETEKEKSLR) adopt a coiled-coil conformation. Residues 569 to 590 (EHELMEQKRREEGIETEKEKSL) are compositionally biased toward basic and acidic residues. The interval 569-605 (EHELMEQKRREEGIETEKEKSLRHPSSSSSSRRRNRA) is disordered. Residues 668–720 (DASDNFTDHEHSLFLEGYLIHPKKFGKISHYMGGLRSPEECVLHYYRTKKTVN) form the SANT domain. Over residues 732-745 (RKMSAAAKRRKRKE) the composition is skewed to basic residues. Positions 732-796 (RKMSAAAKRR…SEVKGDPLGT (65 aa)) are disordered. Residues 748 to 758 (NDEEVEVDESK) show a composition bias toward acidic residues. Positions 759 to 773 (EESTNTIEKEEKSEN) are enriched in basic and acidic residues. Threonine 796 bears the Phosphothreonine mark. The 55-residue stretch at 884–938 (APEHKTSYWSVRESQLFPELLKEFGSQWSLISEKLGTKSTTMVRNYYQRNAARNG) folds into the HTH myb-type domain. A DNA-binding region (H-T-H motif) is located at residues 911–934 (WSLISEKLGTKSTTMVRNYYQRNA). Serine 1037 is subject to Phosphoserine. Residues 1172–1194 (SQGTPTFPLPAPRTSPISRAPPK) form a disordered region.

In terms of assembly, identified in a Set3C complex with SET3, HST1, HOS2, SIF2, CPR1 and HOS4.

It localises to the nucleus. Its function is as follows. Part of the Set3C complex, which is required to repress early/middle sporulation genes during meiosis. The chain is Probable DNA-binding protein SNT1 (SNT1) from Saccharomyces cerevisiae (strain ATCC 204508 / S288c) (Baker's yeast).